The primary structure comprises 369 residues: FAD-dependent monooxygenase FPY4 (369 aa).

It belongs to the aromatic-ring hydroxylase family. Requires FAD as cofactor.

Its pathway is secondary metabolite biosynthesis. In terms of biological role, FAD-dependent monooxygenase; part of the gene cluster that mediates the biosynthesis of the gamma-pyrones fusapyrone (FPY) and deoxyfusapyrone (dFPY). FPY is an undecaketide and thus likely synthesized by the polyketide synthase FPY1 from acetyl-CoA functioning as starter unit and the addition of 10 malonyl-CoA extender units by successive Claisen-condensations. Next to this, FPY shares some rare features: C-glycosylated 4-deoxyglucose at C-3, a gem-dimethyl group at C-13, and an alpha-beta to beta-gamma double bond shift at C-20. During FPY biosynthesis mono-C-methyl groups are transferred to the tetra-, penta-, hexa- and heptaketide, while two C-methyl groups are transferred to the nonaketide, suggesting that the CMet domain is programmed to selectively catalyze two successive C-alpha-methylation reactions of the nonaketide, while other alpha-carbons are non- or mono-methylated only. While the origin of the 4'-deoxyglucose moiety remains opaque, its transfer to C-3 is most likely mediated by the C-glycosyltransferase FPY2. Next to this, the hydroxyl group present at C-33 and discriminating between FPY and dFPY, is likely to be installed by the cytochrome P450 monooxygenase FPY7. No putative function can be predicted for the remaining genes FPY3-FPY6. In Fusarium mangiferae (Mango malformation disease fungus), this protein is FAD-dependent monooxygenase FPY4.